A 549-amino-acid chain; its full sequence is Siroheme synthase (549 aa).

Residues M1–L203 are precorrin-2 dehydrogenase /sirohydrochlorin ferrochelatase. Residues D22–V23 and P43–S44 each bind NAD(+). S128 carries the phosphoserine modification. Residues G247 to G549 form a uroporphyrinogen-III C-methyltransferase region. P256 lines the S-adenosyl-L-methionine pocket. D279 (proton acceptor) is an active-site residue. The active-site Proton donor is K301. S-adenosyl-L-methionine contacts are provided by residues G332 to D334, I337, T362 to A363, M414, and A443.

It in the N-terminal section; belongs to the precorrin-2 dehydrogenase / sirohydrochlorin ferrochelatase family. In the C-terminal section; belongs to the precorrin methyltransferase family.

It carries out the reaction uroporphyrinogen III + 2 S-adenosyl-L-methionine = precorrin-2 + 2 S-adenosyl-L-homocysteine + H(+). The catalysed reaction is precorrin-2 + NAD(+) = sirohydrochlorin + NADH + 2 H(+). The enzyme catalyses siroheme + 2 H(+) = sirohydrochlorin + Fe(2+). It participates in cofactor biosynthesis; adenosylcobalamin biosynthesis; precorrin-2 from uroporphyrinogen III: step 1/1. It functions in the pathway cofactor biosynthesis; adenosylcobalamin biosynthesis; sirohydrochlorin from precorrin-2: step 1/1. Its pathway is porphyrin-containing compound metabolism; siroheme biosynthesis; precorrin-2 from uroporphyrinogen III: step 1/1. The protein operates within porphyrin-containing compound metabolism; siroheme biosynthesis; siroheme from sirohydrochlorin: step 1/1. It participates in porphyrin-containing compound metabolism; siroheme biosynthesis; sirohydrochlorin from precorrin-2: step 1/1. Multifunctional enzyme that catalyzes the SAM-dependent methylations of uroporphyrinogen III at position C-2 and C-7 to form precorrin-2 via precorrin-1. Then it catalyzes the NAD-dependent ring dehydrogenation of precorrin-2 to yield sirohydrochlorin. Finally, it catalyzes the ferrochelation of sirohydrochlorin to yield siroheme. The chain is Siroheme synthase from Psychrobacter arcticus (strain DSM 17307 / VKM B-2377 / 273-4).